The following is a 100-amino-acid chain: Urease subunit gamma (100 aa).

The protein belongs to the urease gamma subunit family. As to quaternary structure, heterotrimer of UreA (gamma), UreB (beta) and UreC (alpha) subunits. Three heterotrimers associate to form the active enzyme.

It localises to the cytoplasm. The enzyme catalyses urea + 2 H2O + H(+) = hydrogencarbonate + 2 NH4(+). The protein operates within nitrogen metabolism; urea degradation; CO(2) and NH(3) from urea (urease route): step 1/1. The sequence is that of Urease subunit gamma from Burkholderia ambifaria (strain MC40-6).